The primary structure comprises 927 residues: MGRPGMDSSEGRESNGVVPERNGGAVPAKQQLDGKDTLRYANILRSRNKFAEALQLYNNVLEKDEANVEALIGKGICLQAQSLPMQAIECFNEAVRIDPGNACALTYCGMIYKDEGHLVEAAEAYQKARNADPSYKPAAEFLAIVLTDLGTSLKLAGNTEEGIQKYCEALEVDSHYAPAYYNLGVVYSEMMQFDLALTCYEKAALERPLYAEAYCNMGVIYKNRGELEAAIACYERCLTISPNFEIAKNNMAIALTDLGTKVKIEGDINQGVAYYKKALFYNWHYADAMYNLGVAYGEMLNFEMAIVFYELALHFNPRCAEACNNLGVIYKDRDNLDKAVECYQMALSIKPNFSQSLNNLGVVYTVQGKMDAASSMIQKAIFANSTYAEAYNNLGVLYRDAGSITSAVQAYEKCLQIDPDSRNAGQNRLLALNYIDEGFDDKLYQAHREWGKRFLKLYPQYTSWDNPKVADRPLVIGYVSPDYFTHSVSYFIEAPLAHHDYSNYKVVVYSGVVKADAKTLRFKDKVLKKGGLWRDIYGIDEKKVASLVREDKVDILVELTGHTANNKLGTMACRPAPIQVTWIGYPNTTGLPTIDYRITDSLADPPDTTQKHVEELVRLPESFLCYSPSPEAGPVCPTPAILNGFITFGSFNNLAKITPKVLQVWAKILCAVPNSRLVVKCKPFCCDSIRQKFLSTLAELGLEPLRVDLLPLIHLNHDHMQAYSLMDISLDTFPYAGTTTTCESLYMGVPCVTMAGSVHAHNVGVSLLTKVGLGRLVAKSENEYVSLALDLAADVTALQELRMSLRGLMAKSPVCDGENFTRGLESAYRNMWRRYCDGDAPALRRLDLLQEEPCSNNNKQDFDDNQVAKLADLKAQRVDAAVDGDKQSQLTAHAAVVGEVQQAPIMVNGVSSPVSSGKVEANGHISR.

The tract at residues 1-31 (MGRPGMDSSEGRESNGVVPERNGGAVPAKQQ) is disordered. TPR repeat units lie at residues 34–67 (GKDTLRYANILRSRNKFAEALQLYNNVLEKDEAN), 68–101 (VEALIGKGICLQAQSLPMQAIECFNEAVRIDPGN), 102–135 (ACALTYCGMIYKDEGHLVEAAEAYQKARNADPSY), 143–176 (AIVLTDLGTSLKLAGNTEEGIQKYCEALEVDSHY), 177–210 (APAYYNLGVVYSEMMQFDLALTCYEKAALERPLY), 211–244 (AEAYCNMGVIYKNRGELEAAIACYERCLTISPNF), 252–285 (AIALTDLGTKVKIEGDINQGVAYYKKALFYNWHY), 286–319 (ADAMYNLGVAYGEMLNFEMAIVFYELALHFNPRC), 320–353 (AEACNNLGVIYKDRDNLDKAVECYQMALSIKPNF), 355–387 (QSLNNLGVVYTVQGKMDAASSMIQKAIFANSTY), and 388–421 (AEAYNNLGVLYRDAGSITSAVQAYEKCLQIDPDS). Residues 422–927 (RNAGQNRLLA…KVEANGHISR (506 aa)) form a catalytic region region.

The protein belongs to the glycosyltransferase 41 family. O-GlcNAc transferase subfamily.

The protein resides in the nucleus. The catalysed reaction is L-seryl-[protein] + UDP-N-acetyl-alpha-D-glucosamine = 3-O-(N-acetyl-beta-D-glucosaminyl)-L-seryl-[protein] + UDP + H(+). The enzyme catalyses L-threonyl-[protein] + UDP-N-acetyl-alpha-D-glucosamine = 3-O-(N-acetyl-beta-D-glucosaminyl)-L-threonyl-[protein] + UDP + H(+). It functions in the pathway protein modification; protein glycosylation. Probable O-linked N-acetylglucosamine transferase (OGT) involved in various processes such as gibberellin (GA) signaling pathway. OGTs catalyze the addition of nucleotide-activated sugars directly onto the polypeptide through O-glycosidic linkage with the hydroxyl of serine or threonine. Probably acts by adding O-linked sugars to yet unknown proteins. This chain is Probable UDP-N-acetylglucosamine--peptide N-acetylglucosaminyltransferase SPINDLY (SPY), found in Oryza sativa subsp. japonica (Rice).